The following is a 502-amino-acid chain: Xylan O-acetyltransferase 13 (502 aa).

Topologically, residues 1 to 53 are cytoplasmic; sequence MWSALFSHLREVHKRSGVKEEKLIMKSPPAAGEAGCHKPQATATNKMTVLQSP. Residues 54–76 traverse the membrane as a helical; Signal-anchor for type II membrane protein segment; sequence LGLRTILTSLVAFFIVVSSVSLL. The Lumenal portion of the chain corresponds to 77-502; sequence FDRGQDAQAQ…EFLYAYIMHK (426 aa). 4 disulfide bridges follow: Cys-152-Cys-203, Cys-174-Cys-239, Cys-183-Cys-483, and Cys-399-Cys-479. 4 N-linked (GlcNAc...) asparagine glycosylation sites follow: Asn-153, Asn-163, Asn-189, and Asn-209. The GDS motif signature appears at 226 to 228; that stretch reads GDS. Ser-228 acts as the Nucleophile in catalysis. N-linked (GlcNAc...) asparagine glycans are attached at residues Asn-255, Asn-267, Asn-372, Asn-401, and Asn-442. Asp-478 serves as the catalytic Proton donor. The short motif at 478 to 481 is the DXXH motif element; that stretch reads DCTH. His-481 acts as the Proton acceptor in catalysis.

The protein belongs to the PC-esterase family. TBL subfamily.

The protein localises to the golgi apparatus membrane. Xylan acetyltransferase required for 2-O- and 3-O-monoacetylation of xylosyl residues in xylan. Catalyzes the 2-O-acetylation of xylan, followed by nonenzymatic acetyl migration to the O-3 position, resulting in products that are monoacetylated at both O-2 and O-3 positions. This is Xylan O-acetyltransferase 13 from Oryza sativa subsp. japonica (Rice).